We begin with the raw amino-acid sequence, 241 residues long: Proteasome subunit beta type-1 (241 aa).

Residue methionine 1 is modified to N-acetylmethionine. The propeptide occupies 1-28; it reads MLSSVAAYSGAGRDLAMEPHSSVGPLQL. An O-linked (GlcNAc) serine glycan is attached at serine 58. 2 positions are modified to phosphoserine: serine 62 and serine 68. Position 150 is a phosphotyrosine (tyrosine 150). Position 162 is a phosphoserine (serine 162). The residue at position 204 (lysine 204) is an N6-acetyllysine. The O-linked (GlcNAc) serine glycan is linked to serine 209.

This sequence belongs to the peptidase T1B family. The 26S proteasome consists of a 20S proteasome core and two 19S regulatory subunits. The 20S proteasome core is a barrel-shaped complex made of 28 subunits that are arranged in four stacked rings. The two outer rings are each formed by seven alpha subunits, and the two inner rings are formed by seven beta subunits. The proteolytic activity is exerted by three beta-subunits PSMB5, PSMB6 and PSMB7. Interacts with SERPINB2. Interacts with RFPL4A.

The protein localises to the cytoplasm. It localises to the nucleus. In terms of biological role, non-catalytic component of the 20S core proteasome complex involved in the proteolytic degradation of most intracellular proteins. This complex plays numerous essential roles within the cell by associating with different regulatory particles. Associated with two 19S regulatory particles, forms the 26S proteasome and thus participates in the ATP-dependent degradation of ubiquitinated proteins. The 26S proteasome plays a key role in the maintenance of protein homeostasis by removing misfolded or damaged proteins that could impair cellular functions, and by removing proteins whose functions are no longer required. Associated with the PA200 or PA28, the 20S proteasome mediates ubiquitin-independent protein degradation. This type of proteolysis is required in several pathways including spermatogenesis (20S-PA200 complex) or generation of a subset of MHC class I-presented antigenic peptides (20S-PA28 complex). The chain is Proteasome subunit beta type-1 (PSMB1) from Bos taurus (Bovine).